The primary structure comprises 220 residues: Protein-L-isoaspartate O-methyltransferase (220 aa).

The active site involves serine 64.

This sequence belongs to the methyltransferase superfamily. L-isoaspartyl/D-aspartyl protein methyltransferase family.

The protein resides in the cytoplasm. The catalysed reaction is [protein]-L-isoaspartate + S-adenosyl-L-methionine = [protein]-L-isoaspartate alpha-methyl ester + S-adenosyl-L-homocysteine. Its function is as follows. Catalyzes the methyl esterification of L-isoaspartyl residues in peptides and proteins that result from spontaneous decomposition of normal L-aspartyl and L-asparaginyl residues. It plays a role in the repair and/or degradation of damaged proteins. This chain is Protein-L-isoaspartate O-methyltransferase, found in Methanoculleus marisnigri (strain ATCC 35101 / DSM 1498 / JR1).